We begin with the raw amino-acid sequence, 407 residues long: Multifunctional CCA protein (407 aa).

ATP-binding residues include Gly8 and Arg11. CTP contacts are provided by Gly8 and Arg11. Positions 21 and 23 each coordinate Mg(2+). ATP is bound by residues Arg91, Arg137, and Arg140. Residues Arg91, Arg137, and Arg140 each coordinate CTP. An HD domain is found at 228-329 (TGIHTLLVAE…VKIFNKLDVW (102 aa)).

This sequence belongs to the tRNA nucleotidyltransferase/poly(A) polymerase family. Bacterial CCA-adding enzyme type 1 subfamily. In terms of assembly, monomer. Can also form homodimers and oligomers. It depends on Mg(2+) as a cofactor. Ni(2+) serves as cofactor.

It catalyses the reaction a tRNA precursor + 2 CTP + ATP = a tRNA with a 3' CCA end + 3 diphosphate. The enzyme catalyses a tRNA with a 3' CCA end + 2 CTP + ATP = a tRNA with a 3' CCACCA end + 3 diphosphate. Catalyzes the addition and repair of the essential 3'-terminal CCA sequence in tRNAs without using a nucleic acid template. Adds these three nucleotides in the order of C, C, and A to the tRNA nucleotide-73, using CTP and ATP as substrates and producing inorganic pyrophosphate. tRNA 3'-terminal CCA addition is required both for tRNA processing and repair. Also involved in tRNA surveillance by mediating tandem CCA addition to generate a CCACCA at the 3' terminus of unstable tRNAs. While stable tRNAs receive only 3'-terminal CCA, unstable tRNAs are marked with CCACCA and rapidly degraded. In Vibrio vulnificus (strain CMCP6), this protein is Multifunctional CCA protein.